A 187-amino-acid chain; its full sequence is Orotate phosphoribosyltransferase (187 aa).

5-phospho-alpha-D-ribose 1-diphosphate is bound by residues arginine 99, lysine 100, lysine 103, histidine 105, and 125 to 133; that span reads DDVITTGGS. Threonine 129 and arginine 157 together coordinate orotate.

Belongs to the purine/pyrimidine phosphoribosyltransferase family. PyrE subfamily. In terms of assembly, homodimer. Mg(2+) is required as a cofactor.

The catalysed reaction is orotidine 5'-phosphate + diphosphate = orotate + 5-phospho-alpha-D-ribose 1-diphosphate. The protein operates within pyrimidine metabolism; UMP biosynthesis via de novo pathway; UMP from orotate: step 1/2. Its function is as follows. Catalyzes the transfer of a ribosyl phosphate group from 5-phosphoribose 1-diphosphate to orotate, leading to the formation of orotidine monophosphate (OMP). The sequence is that of Orotate phosphoribosyltransferase from Leptospira borgpetersenii serovar Hardjo-bovis (strain JB197).